The primary structure comprises 268 residues: D-alanyl-D-alanine carboxypeptidase (268 aa).

Residues 25 to 47 traverse the membrane as a helical segment; that stretch reads AFLWAFIISFTVCTLFLGWRLVS. Residues glutamine 151, 179-181, and serine 186 each bind substrate; that span reads WVA. Zn(2+) contacts are provided by histidine 188 and aspartate 195. Glutamate 238 serves as the catalytic Proton donor/acceptor. A Zn(2+)-binding site is contributed by histidine 241.

This sequence belongs to the peptidase M15B family. As to quaternary structure, monomer. Requires Zn(2+) as cofactor.

It localises to the cell membrane. Its activity is regulated as follows. Carboxypeptidase activity is insensitive to beta-lactams since it is not affected by penicillin G or ampicillin and is inhibited only by very high concentrations of cefalotin and cefoxitin. Its function is as follows. Carboxypeptidase that cleaves the C-terminal D-alanine residue from the peptidoglycan-derived pentapeptide L-Ala-gamma-D-Glu-L-Lys-D-Ala-D-Ala in vitro. Therefore, should contribute in vivo to the hydrolysis of the D-alanyl-D-alanine-containing peptidoglycan precursors. May increase the level of glycopeptide antibiotics resistance by decreasing the availability of D-Ala-D-Ala termini from the cell surface, which constitute the antibiotic target residues. The protein is D-alanyl-D-alanine carboxypeptidase of Enterococcus faecalis (strain ATCC 700802 / V583).